The chain runs to 516 residues: Putative GTP-binding protein 6 (516 aa).

Residues 18 to 39 show a composition bias toward low complexity; sequence GRGRSAPRAAAPSCPARALAAV. Residues 18–82 form a disordered region; it reads GRGRSAPRAA…PEDADENAEE (65 aa). Positions 57 to 67 are enriched in basic and acidic residues; it reads LRADGGRSRTG. Over residues 68–82 the composition is skewed to acidic residues; sequence DDEEEPEDADENAEE. In terms of domain architecture, Hflx-type G spans 295 to 459; the sequence is PVISVVGYTN…ELDAAVLKAT (165 aa). Residues 301–308, 327–331, 349–352, 418–421, and 437–439 each bind GTP; these read GYTNCGKT, FATLD, DTIG, NKVD, and SAL. The Mg(2+) site is built by threonine 308 and threonine 329.

Belongs to the TRAFAC class OBG-HflX-like GTPase superfamily. HflX GTPase family. The cofactor is Mg(2+). As to expression, ubiquitously expressed.

This chain is Putative GTP-binding protein 6 (GTPBP6), found in Homo sapiens (Human).